The sequence spans 92 residues: Bombyxin A-7 (92 aa).

A signal peptide spans 1–19; the sequence is MKLLLAIALMLTIVMWVST. Glutamine 20 bears the Pyrrolidone carboxylic acid mark. 3 cysteine pairs are disulfide-bonded: cysteine 29–cysteine 79, cysteine 41–cysteine 92, and cysteine 78–cysteine 83. The propeptide at 50 to 70 is c peptide like; the sequence is SDAQYASYGSAWLMPYSEGRG.

Belongs to the insulin family. Heterodimer of a B chain and an A chain linked by two disulfide bonds.

The protein localises to the secreted. Brain peptide responsible for activation of prothoracic glands to produce ecdysone in insects. In Bombyx mori (Silk moth), this protein is Bombyxin A-7 (BBXA7).